An 812-amino-acid polypeptide reads, in one-letter code: Lon protease (812 aa).

In terms of domain architecture, Lon N-terminal spans Tyr22–Ile215. Residue Gly367–Thr374 coordinates ATP. The Lon proteolytic domain occupies Glu602–Arg783. Active-site residues include Ser689 and Lys732. The tract at residues Pro787–His812 is disordered.

The protein belongs to the peptidase S16 family. In terms of assembly, homohexamer. Organized in a ring with a central cavity.

The protein localises to the cytoplasm. The catalysed reaction is Hydrolysis of proteins in presence of ATP.. Functionally, ATP-dependent serine protease that mediates the selective degradation of mutant and abnormal proteins as well as certain short-lived regulatory proteins. Required for cellular homeostasis and for survival from DNA damage and developmental changes induced by stress. Degrades polypeptides processively to yield small peptide fragments that are 5 to 10 amino acids long. Binds to DNA in a double-stranded, site-specific manner. This chain is Lon protease, found in Brucella melitensis biotype 1 (strain ATCC 23456 / CCUG 17765 / NCTC 10094 / 16M).